The chain runs to 290 residues: Arylamine N-acetyltransferase, pineal gland isozyme NAT-3 (290 aa).

C68 functions as the Acyl-thioester intermediate in the catalytic mechanism. Catalysis depends on residues H107 and D122.

The protein belongs to the arylamine N-acetyltransferase family.

It carries out the reaction an arylamine + acetyl-CoA = an N-acetylarylamine + CoA. The enzyme catalyses an N-hydroxyarylamine + acetyl-CoA = an N-acetoxyarylamine + CoA. Catalyzes the N- or O-acetylation of various arylamine and heterocyclic amine substrates, and participates in the detoxification of a plethora of hydrazine and arylamine drugs. The polypeptide is Arylamine N-acetyltransferase, pineal gland isozyme NAT-3 (Gallus gallus (Chicken)).